The sequence spans 95 residues: Aspartyl/glutamyl-tRNA(Asn/Gln) amidotransferase subunit C (95 aa).

It belongs to the GatC family. Heterotrimer of A, B and C subunits.

The catalysed reaction is L-glutamyl-tRNA(Gln) + L-glutamine + ATP + H2O = L-glutaminyl-tRNA(Gln) + L-glutamate + ADP + phosphate + H(+). The enzyme catalyses L-aspartyl-tRNA(Asn) + L-glutamine + ATP + H2O = L-asparaginyl-tRNA(Asn) + L-glutamate + ADP + phosphate + 2 H(+). Allows the formation of correctly charged Asn-tRNA(Asn) or Gln-tRNA(Gln) through the transamidation of misacylated Asp-tRNA(Asn) or Glu-tRNA(Gln) in organisms which lack either or both of asparaginyl-tRNA or glutaminyl-tRNA synthetases. The reaction takes place in the presence of glutamine and ATP through an activated phospho-Asp-tRNA(Asn) or phospho-Glu-tRNA(Gln). This chain is Aspartyl/glutamyl-tRNA(Asn/Gln) amidotransferase subunit C, found in Hydrogenovibrio crunogenus (strain DSM 25203 / XCL-2) (Thiomicrospira crunogena).